Reading from the N-terminus, the 338-residue chain is Tetraacyldisaccharide 4'-kinase (338 aa).

Residue 67–74 participates in ATP binding; it reads IAGGAGKT.

Belongs to the LpxK family.

It catalyses the reaction a lipid A disaccharide + ATP = a lipid IVA + ADP + H(+). The protein operates within glycolipid biosynthesis; lipid IV(A) biosynthesis; lipid IV(A) from (3R)-3-hydroxytetradecanoyl-[acyl-carrier-protein] and UDP-N-acetyl-alpha-D-glucosamine: step 6/6. Transfers the gamma-phosphate of ATP to the 4'-position of a tetraacyldisaccharide 1-phosphate intermediate (termed DS-1-P) to form tetraacyldisaccharide 1,4'-bis-phosphate (lipid IVA). This is Tetraacyldisaccharide 4'-kinase from Acidovorax sp. (strain JS42).